Here is a 735-residue protein sequence, read N- to C-terminus: Protostadienol synthase A (735 aa).

The PFTB 1 repeat unit spans residues 129 to 170 (KNEMIRYLLNFVNEDGGWGLWINSPSTVFGTTMNYTMLRILG). The Proton donor role is filled by D460. 3 PFTB repeats span residues 487–528 (LAEA…YDNV), 564–604 (MARC…ETVG), and 613–660 (CRNA…ALMG).

The protein belongs to the terpene cyclase/mutase family.

The catalysed reaction is (S)-2,3-epoxysqualene = (17Z)-protosta-17(20),24-dien-3beta-ol. Functionally, protostadienol synthase which cyclizes (3S)-oxidosqualene to (17Z)-protosta-17(20),24-dien-3-beta-ol (protostadienol), the biosynthetic precursor of helvolic acid, a secondary metabolite which promotes virulence. The sequence is that of Protostadienol synthase A (PDSA) from Arthroderma gypseum (strain ATCC MYA-4604 / CBS 118893) (Microsporum gypseum).